The sequence spans 322 residues: UPF0324 membrane protein BB4178 (322 aa).

The next 10 membrane-spanning stretches (helical) occupy residues 13–35 (FIRQFGFSPLVVGIVCGMLYGNF), 50–69 (FTARRLLRIAVAFYGLNISI), 76–98 (GLPGLAVSVGVVASTLLIGTVAG), 108–127 (TAMLTAAGSAICGAAAVLAF), 139–161 (AVAVATVVLFGTLSMFLYPVIYH), 171–193 (ALGIYIGGTVHEVAQVVGAASNI), 209–231 (VALLVPVLLVLGFWLRASAAAGA), 241–260 (VPWFAIGFLVLAIVNSLDIL), 273–292 (VFVLTMAMTALGIETRFAQI), and 296–318 (GPRVMALGLVLYAWLVFGGYGIV).

Belongs to the UPF0324 family.

Its subcellular location is the cell membrane. In Bordetella bronchiseptica (strain ATCC BAA-588 / NCTC 13252 / RB50) (Alcaligenes bronchisepticus), this protein is UPF0324 membrane protein BB4178.